Here is a 273-residue protein sequence, read N- to C-terminus: Large ribosomal subunit protein uL2 (273 aa).

Residues 221 to 262 (RGTAMNPVDHPHGGGEGRNFGKHPVTPWGVQTKGKKTRHNKR) form a disordered region. Basic residues predominate over residues 253-262 (KGKKTRHNKR).

This sequence belongs to the universal ribosomal protein uL2 family. As to quaternary structure, part of the 50S ribosomal subunit. Forms a bridge to the 30S subunit in the 70S ribosome.

Functionally, one of the primary rRNA binding proteins. Required for association of the 30S and 50S subunits to form the 70S ribosome, for tRNA binding and peptide bond formation. It has been suggested to have peptidyltransferase activity; this is somewhat controversial. Makes several contacts with the 16S rRNA in the 70S ribosome. The sequence is that of Large ribosomal subunit protein uL2 from Aggregatibacter actinomycetemcomitans (Actinobacillus actinomycetemcomitans).